Reading from the N-terminus, the 108-residue chain is Putative double-stranded DNA mimic protein PBPRA1522 (108 aa).

It belongs to the putative dsDNA mimic protein family.

Functionally, may act as a double-stranded DNA (dsDNA) mimic. Probably regulates the activity of a dsDNA-binding protein. This Photobacterium profundum (strain SS9) protein is Putative double-stranded DNA mimic protein PBPRA1522.